We begin with the raw amino-acid sequence, 231 residues long: Putative N-acetylmannosamine-6-phosphate 2-epimerase (231 aa).

The protein belongs to the NanE family.

The enzyme catalyses an N-acyl-D-glucosamine 6-phosphate = an N-acyl-D-mannosamine 6-phosphate. Its pathway is amino-sugar metabolism; N-acetylneuraminate degradation; D-fructose 6-phosphate from N-acetylneuraminate: step 3/5. Functionally, converts N-acetylmannosamine-6-phosphate (ManNAc-6-P) to N-acetylglucosamine-6-phosphate (GlcNAc-6-P). This is Putative N-acetylmannosamine-6-phosphate 2-epimerase from Listeria innocua serovar 6a (strain ATCC BAA-680 / CLIP 11262).